A 353-amino-acid polypeptide reads, in one-letter code: Protein MGF 360-13L (353 aa).

It belongs to the asfivirus MGF 360 family.

Functionally, plays a role in virus cell tropism, and may be required for efficient virus replication in macrophages. This chain is Protein MGF 360-13L, found in Ornithodoros (relapsing fever ticks).